The sequence spans 443 residues: Anamorsin homolog (443 aa).

Residues 136–301 (LSSAPRVLVL…AAGVADALSG (166 aa)) are N-terminal SAM-like domain. The interval 302-331 (NRGALPNGTAQTDGDDFIDESTLIDPTESY) is linker. Cys-341, Cys-348, Cys-351, and Cys-353 together coordinate [2Fe-2S] cluster. A fe-S binding site A region spans residues 341 to 353 (CASRPKACPNCTC). [4Fe-4S] cluster contacts are provided by Cys-380, Cys-383, Cys-391, and Cys-394. Short sequence motifs (cx2C motif) lie at residues 380 to 383 (CGNC) and 391 to 394 (CAGC). A fe-S binding site B region spans residues 380–394 (CGNCYLGDAFRCAGC).

It belongs to the anamorsin family. As to quaternary structure, monomer. [2Fe-2S] cluster serves as cofactor. The cofactor is [4Fe-4S] cluster.

The protein resides in the cytoplasm. The protein localises to the mitochondrion intermembrane space. Functionally, component of the cytosolic iron-sulfur (Fe-S) protein assembly (CIA) machinery. Required for the maturation of extramitochondrial Fe-S proteins. Part of an electron transfer chain functioning in an early step of cytosolic Fe-S biogenesis, facilitating the de novo assembly of a [4Fe-4S] cluster on the cytosolic Fe-S scaffold complex. Electrons are transferred from NADPH via a FAD- and FMN-containing diflavin oxidoreductase. Together with the diflavin oxidoreductase, also required for the assembly of the diferric tyrosyl radical cofactor of ribonucleotide reductase (RNR), probably by providing electrons for reduction during radical cofactor maturation in the catalytic small subunit. In Toxoplasma gondii (strain ATCC 50861 / VEG), this protein is Anamorsin homolog.